The chain runs to 641 residues: Bilirubin reductase (641 aa).

Residue glutamine 96 participates in FMN binding. Arginine 167 serves as the catalytic Proton donor. Residues lysine 214, arginine 295, and 317-318 contribute to the FMN site; that span reads GR. Residues cysteine 341, cysteine 344, cysteine 348, and cysteine 360 each contribute to the [4Fe-4S] cluster site. 5 residues coordinate FAD: alanine 391, glutamate 410, glutamine 418, lysine 428, and alanine 455.

This sequence in the N-terminal section; belongs to the NADH:flavin oxidoreductase/NADH oxidase family. FAD serves as cofactor. FMN is required as a cofactor. It depends on [4Fe-4S] cluster as a cofactor.

It catalyses the reaction urobilinogen + 4 A = (4Z,15Z)-bilirubin IXalpha + 4 AH2. It carries out the reaction urobilinogen + 2 A = (4Z,15Z)-mesobilirubin IXalpha + 2 AH2. It participates in porphyrin-containing compound metabolism; protoheme degradation. Its function is as follows. Bilirubin reductase that catalyzes reduction of mesobilirubin and/or bilirubin to urobilinogen, a key step during heme degradation. Urobilinogen then spontaneously degrades into urobilin, which gives urine its distinctive yellow color. The sequence is that of Bilirubin reductase from Mediterraneibacter gnavus (strain CC55_001C).